Reading from the N-terminus, the 360-residue chain is Phospho-N-acetylmuramoyl-pentapeptide-transferase (360 aa).

The next 10 membrane-spanning stretches (helical) occupy residues 21-41 (YLTF…LWIG), 71-91 (TPTM…ILWA), 94-114 (SNPY…IGFI), 142-162 (LVVA…VLVV), 168-188 (IMPQ…VGAS), 199-219 (GLAI…AWAT), 236-256 (ASEL…FLWF), 263-283 (VFMG…IAVL), 288-308 (FLLF…ILQV), and 338-358 (VIVR…VTLK).

The protein belongs to the glycosyltransferase 4 family. MraY subfamily. It depends on Mg(2+) as a cofactor.

It is found in the cell inner membrane. The catalysed reaction is UDP-N-acetyl-alpha-D-muramoyl-L-alanyl-gamma-D-glutamyl-meso-2,6-diaminopimeloyl-D-alanyl-D-alanine + di-trans,octa-cis-undecaprenyl phosphate = di-trans,octa-cis-undecaprenyl diphospho-N-acetyl-alpha-D-muramoyl-L-alanyl-D-glutamyl-meso-2,6-diaminopimeloyl-D-alanyl-D-alanine + UMP. Its pathway is cell wall biogenesis; peptidoglycan biosynthesis. In terms of biological role, catalyzes the initial step of the lipid cycle reactions in the biosynthesis of the cell wall peptidoglycan: transfers peptidoglycan precursor phospho-MurNAc-pentapeptide from UDP-MurNAc-pentapeptide onto the lipid carrier undecaprenyl phosphate, yielding undecaprenyl-pyrophosphoryl-MurNAc-pentapeptide, known as lipid I. This is Phospho-N-acetylmuramoyl-pentapeptide-transferase from Tolumonas auensis (strain DSM 9187 / NBRC 110442 / TA 4).